Reading from the N-terminus, the 739-residue chain is Vascular cell adhesion protein 1 (739 aa).

Positions Met-1–Ala-24 are cleaved as a signal peptide. Ig-like C2-type domains are found at residues Phe-25–Asp-111, Pro-119–Glu-212, Pro-223–Gln-309, Pro-312–Gln-397, Glu-408–Tyr-506, Pro-514–Ile-595, and Lys-601–Thr-682. At Phe-25–Glu-698 the chain is on the extracellular side. 5 disulfide bridges follow: Cys-47-Cys-95, Cys-52-Cys-99, Cys-137-Cys-195, Cys-246-Cys-291, and Cys-335-Cys-383. Residue Asn-273 is glycosylated (N-linked (GlcNAc...) asparagine). Residues Asn-424, Asn-531, Asn-561, and Asn-650 are each glycosylated (N-linked (GlcNAc...) asparagine). An intrachain disulfide couples Cys-534 to Cys-579. A helical transmembrane segment spans residues Leu-699–Ala-720. At Arg-721–Val-739 the chain is on the cytoplasmic side.

In terms of assembly, binds to ECMV-D capsid proteins and acts as a receptor for this virus. In terms of processing, cleaved by the metalloproteinase ADAM17 to generate the soluble form. Post-translationally, sialoglycoprotein. Ubiquitinated by TRIM65 via 'Lys-48'-linked ubiquitination; leading to proteasomal degradation. In terms of tissue distribution, expressed in aortic endothelial cells, with low expression in the descending thoracic aorta and the outer curvature of the aortic arch, where pulsatory shear stress exists, and high in the inner curvature of the aortic arch, where oscillatory shear stress prevails (at protein level). Expressed on inflamed vascular endothelium, as well as on macrophage-like and dendritic cell types in both normal and inflamed tissue.

The protein resides in the cell membrane. The protein localises to the secreted. Cell adhesion glycoprotein predominantly expressed on the surface of endothelial cells that plays an important role in immune surveillance and inflammation. Acts as a major regulator of leukocyte adhesion to the endothelium through interaction with different types of integrins. During inflammatory responses, binds ligands on the surface of activated endothelial cells to initiate the activation of calcium channels and the plasma membrane-associated small GTPase RAC1 leading to leukocyte transendothelial migration. Also serves as a quality-control checkpoint for entry into bone marrow by providing a 'don't-eat-me' stamping in the context of major histocompatibility complex (MHC) class-I presentation. The sequence is that of Vascular cell adhesion protein 1 (Vcam1) from Rattus norvegicus (Rat).